A 302-amino-acid chain; its full sequence is Ribosomal RNA small subunit methyltransferase A (302 aa).

S-adenosyl-L-methionine is bound by residues Asn-27, Leu-29, Gly-54, Glu-75, Asp-100, and Asn-138.

This sequence belongs to the class I-like SAM-binding methyltransferase superfamily. rRNA adenine N(6)-methyltransferase family. RsmA subfamily.

It is found in the cytoplasm. It catalyses the reaction adenosine(1518)/adenosine(1519) in 16S rRNA + 4 S-adenosyl-L-methionine = N(6)-dimethyladenosine(1518)/N(6)-dimethyladenosine(1519) in 16S rRNA + 4 S-adenosyl-L-homocysteine + 4 H(+). Specifically dimethylates two adjacent adenosines (A1518 and A1519) in the loop of a conserved hairpin near the 3'-end of 16S rRNA in the 30S particle. May play a critical role in biogenesis of 30S subunits. In Natranaerobius thermophilus (strain ATCC BAA-1301 / DSM 18059 / JW/NM-WN-LF), this protein is Ribosomal RNA small subunit methyltransferase A.